The chain runs to 649 residues: L-ornithine N(5)-monooxygenase (649 aa).

FAD-binding positions include 72-80 (EKRGHFAWH) and Gln91. Residue Lys96 coordinates substrate. Val157 contributes to the FAD binding site. NADP(+) contacts are provided by residues 289 to 292 (AGQS) and Arg314. Residues 328 to 331 (NSAA) and Asn359 contribute to the substrate site. NADP(+) is bound at residue 359-361 (NYS). Residues 512 to 547 (AMQSDAVRSGKSSPGSGSDASSTSSQQTLASENSTE) form a disordered region. The segment covering 520 to 536 (SGKSSPGSGSDASSTSS) has biased composition (low complexity). The segment covering 537–547 (QQTLASENSTE) has biased composition (polar residues). 569 to 571 (SLL) is an FAD binding site. Ser572 is a substrate binding site. The disordered stretch occupies residues 585-611 (LLQRLPRTRRGTASSAATQPAASTVAS). Residues 596 to 611 (TASSAATQPAASTVAS) show a composition bias toward low complexity.

This sequence belongs to the lysine N(6)-hydroxylase/L-ornithine N(5)-oxygenase family. As to quaternary structure, homotetramer. FAD serves as cofactor.

It catalyses the reaction L-ornithine + NADPH + O2 = N(5)-hydroxy-L-ornithine + NADP(+) + H2O. It carries out the reaction L-ornithine + NADH + O2 = N(5)-hydroxy-L-ornithine + NAD(+) + H2O. The protein operates within siderophore biosynthesis; ferrichrome biosynthesis. Its function is as follows. Catalyzes the conversion of L-ornithine to N(5)-hydroxyornithine, the first step in the biosynthesis of all hydroxamate-containing siderophores, such as ferrichrome. The polypeptide is L-ornithine N(5)-monooxygenase (SID1) (Mycosarcoma maydis (Corn smut fungus)).